A 530-amino-acid polypeptide reads, in one-letter code: White collar 2 protein (530 aa).

A run of 7 repeats spans residues 9–12 (GSSM), 21–24 (GSGM), 25–28 (GSGM), 29–32 (GSGM), 33–36 (GTGM), 37–40 (GTGM), and 41–44 (GTGM). Residues 9-44 (GSSMYGFGAMGMGSGMGSGMGSGMGTGMGTGMGTGM) form a 7 X 4 AA repeats of G-[SAT]-G-M region. The disordered stretch occupies residues 134-158 (IATPTTTTSGPSGGPSSGGGSTLTE). The segment covering 144 to 154 (PSGGPSSGGGS) has biased composition (gly residues). The region spanning 162–232 (RRNWPAKVVE…AELNEAIATG (71 aa)) is the PAS domain. Positions 315-343 (REEQEEQEESHRTWRMSQEGRSDVTPSDD) are disordered. The GATA-type zinc-finger motif lies at 468-493 (CTDCGTLDSPEWRKGPSGPKTLCNAC). The interval 504–530 (KNANNNNNGGGIGGHNDIHTPMGDHMG) is disordered.

Heterodimer of wc-1 and wc-2 (Potential). Binds to DNA.

The protein localises to the nucleus. May function as a transcription factor involved in light regulation. Binds and affects blue light regulation of the al-3 gene. Wc-1 and wc-2 interact via homologous PAS domains, bind to promoters of light regulated genes such as frq, and activate transcription. May bind directly to frq. This chain is White collar 2 protein (wc-2), found in Neurospora crassa (strain ATCC 24698 / 74-OR23-1A / CBS 708.71 / DSM 1257 / FGSC 987).